The following is a 343-amino-acid chain: MPESDLEELPGVGPATAEKLRDNGFDAFQSLAVANSAELSNTADIGESTAADVIQAAREAADVGGFETGATVLERREQIGKLTWNIPEVDDLLGGGVETQSITEVYGEFGAGKSQVTHQLAVNVQLPTEYGGLHGRAVFIDSEDTFRPERIDDMVRGLSDETLQAAMEAHEIEGSTDDEDTLTELVDAFLDKIHVAKGFNSNHQMLLAEKAKEIASEHEDGDWPVRMLTVDSLTAHFRAEYVGRGELADRQQKLNKHLHDLEKVGNLYNAAVLVTNQVQSNPDAFFGDPTKPIGGNILGHKSTFRMYLRKSKNDKRIVKLVDAPNLADGEAVMRVQDEGLKPE.

Position 107–114 (Gly107–Ser114) interacts with ATP.

It belongs to the eukaryotic RecA-like protein family.

In terms of biological role, involved in DNA repair and in homologous recombination. Binds and assemble on single-stranded DNA to form a nucleoprotein filament. Hydrolyzes ATP in a ssDNA-dependent manner and promotes DNA strand exchange between homologous DNA molecules. This chain is DNA repair and recombination protein RadA, found in Halobacterium salinarum (strain ATCC 29341 / DSM 671 / R1).